We begin with the raw amino-acid sequence, 307 residues long: Phosphoribosylaminoimidazole-succinocarboxamide synthase (307 aa).

Belongs to the SAICAR synthetase family.

The catalysed reaction is 5-amino-1-(5-phospho-D-ribosyl)imidazole-4-carboxylate + L-aspartate + ATP = (2S)-2-[5-amino-1-(5-phospho-beta-D-ribosyl)imidazole-4-carboxamido]succinate + ADP + phosphate + 2 H(+). It functions in the pathway purine metabolism; IMP biosynthesis via de novo pathway; 5-amino-1-(5-phospho-D-ribosyl)imidazole-4-carboxamide from 5-amino-1-(5-phospho-D-ribosyl)imidazole-4-carboxylate: step 1/2. The protein is Phosphoribosylaminoimidazole-succinocarboxamide synthase of Thermobifida fusca (strain YX).